The chain runs to 62 residues: Large ribosomal subunit protein uL29 (62 aa).

Belongs to the universal ribosomal protein uL29 family.

The protein is Large ribosomal subunit protein uL29 of Amoebophilus asiaticus (strain 5a2).